We begin with the raw amino-acid sequence, 202 residues long: Dephospho-CoA kinase (202 aa).

A DPCK domain is found at 6-202 (KVSITGDLSS…EYFYALKGAL (197 aa)). Position 14–19 (14–19 (SSGKTE)) interacts with ATP.

Belongs to the CoaE family.

It localises to the cytoplasm. It catalyses the reaction 3'-dephospho-CoA + ATP = ADP + CoA + H(+). The protein operates within cofactor biosynthesis; coenzyme A biosynthesis; CoA from (R)-pantothenate: step 5/5. Functionally, catalyzes the phosphorylation of the 3'-hydroxyl group of dephosphocoenzyme A to form coenzyme A. The sequence is that of Dephospho-CoA kinase from Chlamydia pneumoniae (Chlamydophila pneumoniae).